Reading from the N-terminus, the 254-residue chain is MGRDLRPGSRVLLLLLLLLLVYLTQPGNGNEGSVTGSCYCGKRISSDSPPSVQFMNRLRKHLRAYHRCLYYTRFQLLSWSVCGGNKDPWVQELMSCLDLKECGHAYSGIVAHQKHLLPTSPPISQASEGASSDIHTPAQMLLSTLQSTQRPTLPVGSLSSDKELTRPNETTIHTAGHSLAAGPEAGENQKQPEKNAGPTARTSATVPVLCLLAIIFILTAALSYVLCKRRRGQSPQSSPDLPVHYIPVAPDSNT.

The N-terminal stretch at 1–29 (MGRDLRPGSRVLLLLLLLLLVYLTQPGNG) is a signal peptide. Residues 30–205 (NEGSVTGSCY…AGPTARTSAT (176 aa)) lie on the Extracellular side of the membrane. Residues 32–107 (GSVTGSCYCG…DLKECGHAYS (76 aa)) are chemokine. Cystine bridges form between Cys-38–Cys-68 and Cys-40–Cys-82. Residues 146–165 (QSTQRPTLPVGSLSSDKELT) form a disordered region. Asn-168 is a glycosylation site (N-linked (GlcNAc...) asparagine). Residues 178–200 (SLAAGPEAGENQKQPEKNAGPTA) are disordered. Residues 206–226 (VPVLCLLAIIFILTAALSYVL) form a helical membrane-spanning segment. Residues 227–254 (CKRRRGQSPQSSPDLPVHYIPVAPDSNT) are Cytoplasmic-facing. Residues 231-254 (RGQSPQSSPDLPVHYIPVAPDSNT) form a disordered region.

The protein belongs to the intercrine alpha (chemokine CxC) family. Glycosylated. As to expression, expressed in T-cell areas. Expressed in spleen, lymph nodes, lung, kidney, small intestine and thymus. Weak expression in heart and liver and no expression in brain and bone marrow.

The protein localises to the cell membrane. Its subcellular location is the secreted. In terms of biological role, acts as a scavenger receptor on macrophages, which specifically binds to OxLDL (oxidized low density lipoprotein), suggesting that it may be involved in pathophysiology such as atherogenesis. Induces a strong chemotactic response. Induces calcium mobilization. Binds to CXCR6/Bonzo. This Homo sapiens (Human) protein is C-X-C motif chemokine 16 (CXCL16).